The chain runs to 95 residues: Co-chaperonin GroES (95 aa).

It belongs to the GroES chaperonin family. As to quaternary structure, heptamer of 7 subunits arranged in a ring. Interacts with the chaperonin GroEL.

The protein resides in the cytoplasm. Together with the chaperonin GroEL, plays an essential role in assisting protein folding. The GroEL-GroES system forms a nano-cage that allows encapsulation of the non-native substrate proteins and provides a physical environment optimized to promote and accelerate protein folding. GroES binds to the apical surface of the GroEL ring, thereby capping the opening of the GroEL channel. This chain is Co-chaperonin GroES, found in Chlorobium phaeobacteroides (strain BS1).